The following is a 371-amino-acid chain: tRNA-specific 2-thiouridylase MnmA 2 (371 aa).

ATP contacts are provided by residues 13 to 20 (GMSGGVDS) and Met39. Residues 99–101 (NPD) are interaction with target base in tRNA. Cys104 serves as the catalytic Nucleophile. Residues Cys104 and Cys200 are joined by a disulfide bond. ATP is bound at residue Gly128. The interval 150 to 152 (KDQ) is interaction with tRNA. The active-site Cysteine persulfide intermediate is the Cys200. Residues 308-309 (RY) form an interaction with tRNA region.

The protein belongs to the MnmA/TRMU family.

It is found in the cytoplasm. The catalysed reaction is S-sulfanyl-L-cysteinyl-[protein] + uridine(34) in tRNA + AH2 + ATP = 2-thiouridine(34) in tRNA + L-cysteinyl-[protein] + A + AMP + diphosphate + H(+). Catalyzes the 2-thiolation of uridine at the wobble position (U34) of tRNA, leading to the formation of s(2)U34. In Geobacillus kaustophilus (strain HTA426), this protein is tRNA-specific 2-thiouridylase MnmA 2.